A 230-amino-acid chain; its full sequence is MTGSIRSKLSAIDVRQLGTVDYRTAWQLQRELADARVAGGADTLLLLEHPAVYTAGRRTETHERPIDGTPVVGTDRGGKITWHGPGQLVGYPIIGLAEPLDVVNYVRRLEESLIQVCADLGLHAGRVDGRSGVWLPGRPARKVAAIGVRVSRATTLHGFALNCDCDLAAFTAIVPCGISDAAVTSLSAELGRTVTVDEVRATVAAAVCAALDGVLPVGDRVPSHAVPSPL.

A BPL/LPL catalytic domain is found at 38–215 (AGGADTLLLL…AVCAALDGVL (178 aa)). Substrate-binding positions include 76–83 (RGGKITWH), 145–147 (AIG), and 158–160 (GFA). Catalysis depends on Cys176, which acts as the Acyl-thioester intermediate.

Belongs to the LipB family.

Its subcellular location is the cytoplasm. It catalyses the reaction octanoyl-[ACP] + L-lysyl-[protein] = N(6)-octanoyl-L-lysyl-[protein] + holo-[ACP] + H(+). Its pathway is protein modification; protein lipoylation via endogenous pathway; protein N(6)-(lipoyl)lysine from octanoyl-[acyl-carrier-protein]: step 1/2. In terms of biological role, catalyzes the transfer of endogenously produced octanoic acid from octanoyl-acyl-carrier-protein onto the lipoyl domains of lipoate-dependent enzymes. Lipoyl-ACP can also act as a substrate although octanoyl-ACP is likely to be the physiological substrate. The protein is Octanoyltransferase of Mycobacterium bovis (strain BCG / Tokyo 172 / ATCC 35737 / TMC 1019).